A 364-amino-acid polypeptide reads, in one-letter code: Biotin synthase (364 aa).

A Radical SAM core domain is found at 68–303; the sequence is CCGNTVDLCS…QQILRYAGGR (236 aa). Residues Cys-86, Cys-90, and Cys-93 each coordinate [4Fe-4S] cluster. Residues Cys-131, Cys-168, Cys-228, and Arg-298 each coordinate [2Fe-2S] cluster.

Belongs to the radical SAM superfamily. Biotin synthase family. Homodimer. Requires [4Fe-4S] cluster as cofactor. [2Fe-2S] cluster is required as a cofactor.

It catalyses the reaction (4R,5S)-dethiobiotin + (sulfur carrier)-SH + 2 reduced [2Fe-2S]-[ferredoxin] + 2 S-adenosyl-L-methionine = (sulfur carrier)-H + biotin + 2 5'-deoxyadenosine + 2 L-methionine + 2 oxidized [2Fe-2S]-[ferredoxin]. It participates in cofactor biosynthesis; biotin biosynthesis; biotin from 7,8-diaminononanoate: step 2/2. Catalyzes the conversion of dethiobiotin (DTB) to biotin by the insertion of a sulfur atom into dethiobiotin via a radical-based mechanism. The polypeptide is Biotin synthase (Microcystis aeruginosa (strain NIES-843 / IAM M-2473)).